The primary structure comprises 481 residues: Surface lipoprotein assembly modifier 1 (481 aa).

The first 23 residues, 1–23, serve as a signal peptide directing secretion; that stretch reads MSIQTKFILFLSSSLFLTPYSVA. The N-terminal domain stretch occupies residues 25–192; that stretch reads EKSPQPHDGR…QYLSALNQRD (168 aa). Residues 193–481 form a C-terminal probable beta barrel region; the sequence is QWKIQGGFSF…RIYVEISKTF (289 aa). A run of 14 beta stranded transmembrane segments spans residues 194–204, 233–243, 248–258, 271–281, 285–295, 315–325, 329–338, 353–363, 368–377, 390–400, 405–414, 432–441, 448–458, and 471–481; these read WKIQGGFSFLN, SYFGNAEKKWS, HFTKLSLEGSG, NARAGVGLGYQ, FELSLMPFTEK, SGARLDLSNWL, WQISTALEYG, YLASATLLYLA, YWFGGADYNR, KNVRLGWGQEW, STRLILNYAR, YASVLTIWHR, ITPKLSWSYQK, and NRIYVEISKTF.

The protein belongs to the Slam family.

Its subcellular location is the cell outer membrane. Required for correct export to the cell surface of some cell outer membrane lipoproteins. This Haemophilus influenzae (strain ATCC 51907 / DSM 11121 / KW20 / Rd) protein is Surface lipoprotein assembly modifier 1.